A 260-amino-acid polypeptide reads, in one-letter code: Protein-L-isoaspartate O-methyltransferase (260 aa).

The tract at residues 1–27 (MKSPVAGAVLDPSTPPPTTGTSWRWPG) is disordered. Residue Ser-92 is part of the active site.

This sequence belongs to the methyltransferase superfamily. L-isoaspartyl/D-aspartyl protein methyltransferase family.

It localises to the cytoplasm. It carries out the reaction [protein]-L-isoaspartate + S-adenosyl-L-methionine = [protein]-L-isoaspartate alpha-methyl ester + S-adenosyl-L-homocysteine. Its function is as follows. Catalyzes the methyl esterification of L-isoaspartyl residues in peptides and proteins that result from spontaneous decomposition of normal L-aspartyl and L-asparaginyl residues. It plays a role in the repair and/or degradation of damaged proteins. The sequence is that of Protein-L-isoaspartate O-methyltransferase (pcm) from Aeropyrum pernix (strain ATCC 700893 / DSM 11879 / JCM 9820 / NBRC 100138 / K1).